A 289-amino-acid polypeptide reads, in one-letter code: Splicing factor C9orf78 (289 aa).

Residues 1 to 12 (MPVVRKIFRRRR) show a composition bias toward basic residues. The interval 1 to 27 (MPVVRKIFRRRRGDSESEEDEQDSEEV) is disordered. Residues 5-58 (RKIFRRRRGDSESEEDEQDSEEVRLKLEETREVQNLRKRPNGVSAVALLVGEKV) form an interaction with SNRNP200 region. 2 positions are modified to phosphoserine: S15 and S17. At Y147 the chain carries Phosphotyrosine. The segment covering 232–283 (LNAPIRRNKEEPKARPLRVGDTEKPEPERSPPNRKRPANEKATDDYHYEKFK) has biased composition (basic and acidic residues). The segment at 232–289 (LNAPIRRNKEEPKARPLRVGDTEKPEPERSPPNRKRPANEKATDDYHYEKFKKMNRRY) is disordered. T253 carries the phosphothreonine modification. The residue at position 261 (S261) is a Phosphoserine.

Belongs to the TLS1 family. Component of the spliceosome. Interacts with SNRNP200; the interaction is direct. Interacts with PRPF8.

The protein localises to the nucleus. The protein resides in the chromosome. Its subcellular location is the centromere. Plays a role in pre-mRNA splicing by promoting usage of the upstream 3'-splice site at alternative NAGNAG splice sites; these are sites featuring alternative acceptor motifs separated by only a few nucleotides. May also modulate exon inclusion events. Plays a role in spliceosomal remodeling by displacing WBP4 from SNRNP200 and may act to inhibit SNRNP200 helicase activity. Binds U5 snRNA. Required for proper chromosome segregation. Not required for splicing of shelterin components. The chain is Splicing factor C9orf78 (C9orf78) from Homo sapiens (Human).